The following is a 421-amino-acid chain: Serine--tRNA ligase (421 aa).

230–232 (TAE) is an L-serine binding site. 259–261 (RRE) lines the ATP pocket. An L-serine-binding site is contributed by Glu-282. 346–349 (EISS) contacts ATP. Ser-380 serves as a coordination point for L-serine.

The protein belongs to the class-II aminoacyl-tRNA synthetase family. Type-1 seryl-tRNA synthetase subfamily. In terms of assembly, homodimer. The tRNA molecule binds across the dimer.

The protein resides in the cytoplasm. The catalysed reaction is tRNA(Ser) + L-serine + ATP = L-seryl-tRNA(Ser) + AMP + diphosphate + H(+). It catalyses the reaction tRNA(Sec) + L-serine + ATP = L-seryl-tRNA(Sec) + AMP + diphosphate + H(+). It functions in the pathway aminoacyl-tRNA biosynthesis; selenocysteinyl-tRNA(Sec) biosynthesis; L-seryl-tRNA(Sec) from L-serine and tRNA(Sec): step 1/1. Its function is as follows. Catalyzes the attachment of serine to tRNA(Ser). Is also able to aminoacylate tRNA(Sec) with serine, to form the misacylated tRNA L-seryl-tRNA(Sec), which will be further converted into selenocysteinyl-tRNA(Sec). The protein is Serine--tRNA ligase of Methanosarcina acetivorans (strain ATCC 35395 / DSM 2834 / JCM 12185 / C2A).